The chain runs to 236 residues: MSSNDRDHRRFNSDHHSFWPNPSTYDLNSKIMLAAVASLSGVILIVFALHLYARFVLRRRREAFRGLPVIFRHPFEMPKRGLNPTVIASLPTFTVGATDGVAASATECAVCLSVLKEQDKARELPNCKHIFHVDCVDTWLTTCSTCPVCRTEVEPRPRLEPEPREGPVGTAPQLLVETRLNLTVEAASSSSSDNKTVVSPASRLNSFRKILTRERSSNRINHSCPDQDRVADLERH.

Residues 31–51 form a helical membrane-spanning segment; sequence IMLAAVASLSGVILIVFALHL. The RING-type; atypical zinc finger occupies 108 to 150; sequence CAVCLSVLKEQDKARELPNCKHIFHVDCVDTWLTTCSTCPVCR.

It belongs to the RING-type zinc finger family. ATL subfamily.

Its subcellular location is the membrane. It catalyses the reaction S-ubiquitinyl-[E2 ubiquitin-conjugating enzyme]-L-cysteine + [acceptor protein]-L-lysine = [E2 ubiquitin-conjugating enzyme]-L-cysteine + N(6)-ubiquitinyl-[acceptor protein]-L-lysine.. It functions in the pathway protein modification; protein ubiquitination. In terms of biological role, E3 ubiquitin-protein ligase able to catalyze polyubiquitination with ubiquitin-conjugating enzyme E2 UBC8, UBC10, UBC11, UBC28, UBC29, UBC30, UBC35 and UBC36 in vitro. The chain is E3 ubiquitin-protein ligase ATL41 (ATL41) from Arabidopsis thaliana (Mouse-ear cress).